The sequence spans 106 residues: Small ribosomal subunit protein uS10 (106 aa).

This sequence belongs to the universal ribosomal protein uS10 family. As to quaternary structure, part of the 30S ribosomal subunit.

In terms of biological role, involved in the binding of tRNA to the ribosomes. The polypeptide is Small ribosomal subunit protein uS10 (Pyrobaculum aerophilum (strain ATCC 51768 / DSM 7523 / JCM 9630 / CIP 104966 / NBRC 100827 / IM2)).